We begin with the raw amino-acid sequence, 149 residues long: Leghemoglobin (149 aa).

The region spanning 3–147 is the Globin domain; that stretch reads AFSEKQESLV…LAAAIKKAMG (145 aa). Tyrosine 31 is modified (nitrated tyrosine). Serine 46 is a heme b binding site. Serine 46 carries the phosphoserine modification. O2 is bound at residue histidine 62. Residues lysine 65, histidine 94, and lysine 97 each contribute to the heme b site. Residue tyrosine 135 is modified to Nitrated tyrosine.

Belongs to the plant globin family. As to quaternary structure, monomer. In terms of processing, nitrated in effective nodules and particularly in hypoxic conditions; this mechanism may play a protective role in the symbiosis by buffering toxic peroxynitrite NO(2)(-). Nitration level decrease during nodule senescence. Phosphorylation at Ser-46 disrupts the molecular environment of its porphyrin ring oxygen binding pocket, thus leading to a reduced oxygen consumption and to the delivery of oxygen O(2) to symbiosomes. Root nodules.

The protein localises to the cytoplasm. It is found in the cytosol. It localises to the nucleus. Leghemoglobin that reversibly binds oxygen O(2) through a pentacoordinated heme iron. In root nodules, facilitates the diffusion of oxygen to the bacteroids while preventing the bacterial nitrogenase from being inactivated by buffering dioxygen, nitric oxide and carbon monoxide, and promoting the formation of reactive oxygen species (ROS, e.g. H(2)O(2)). This role is essential for symbiotic nitrogen fixation (SNF). This chain is Leghemoglobin, found in Canavalia lineata (Beach bean).